Here is an 83-residue protein sequence, read N- to C-terminus: Cobrotoxin homolog (83 aa).

Residues 1–21 form the signal peptide; it reads METLLLTLLVVTIVCLDLGYT. Disulfide bonds link cysteine 24-cysteine 45, cysteine 38-cysteine 62, cysteine 64-cysteine 75, and cysteine 76-cysteine 81.

Belongs to the three-finger toxin family. Short-chain subfamily. Type I alpha-neurotoxin sub-subfamily. In terms of tissue distribution, expressed by the venom gland.

It is found in the secreted. Its function is as follows. Binds to muscle nicotinic acetylcholine receptor (nAChR) and inhibit acetylcholine from binding to the receptor, thereby impairing neuromuscular transmission. The sequence is that of Cobrotoxin homolog from Naja naja (Indian cobra).